The primary structure comprises 100 residues: EKC/KEOPS complex subunit GON7 (100 aa).

Met1 bears the N-acetylmethionine mark. Residues 50 to 100 form a disordered region; that stretch reads SPVQGEAQDRVAAAPEEALDGDDEDDAEDENNIDNRTNSDGPTAKRPKPPS. The span at 66–81 shows a compositional bias: acidic residues; sequence EALDGDDEDDAEDENN.

In terms of assembly, component of the EKC/KEOPS complex composed of at least GON7, TP53RK, TPRKB, OSGEP and LAGE3; the whole complex dimerizes.

The protein localises to the nucleus. Component of the EKC/KEOPS complex that is required for the formation of a threonylcarbamoyl group on adenosine at position 37 (t(6)A37) in tRNAs that read codons beginning with adenine. The complex is probably involved in the transfer of the threonylcarbamoyl moiety of threonylcarbamoyl-AMP (TC-AMP) to the N6 group of A37. GON7 plays a supporting role to the catalytic subunit OSGEP in the complex. This chain is EKC/KEOPS complex subunit GON7, found in Sus scrofa (Pig).